Reading from the N-terminus, the 688-residue chain is MFKKLFGQLQRIGKALMLPVAILPAAGILLAFGNAMHNEQLVEIAPWLKNDIIVMISSVMEAAGQVVFDNLPLLFAVGTALGLAGGDGVAALAALVGYLIMNATMGKVLHITIDDIFSYAKGAKELSQAAKEPAHALVLGIPTLQTGVFGGIIMGALAAWCYNKFYNITLPPFLGFFAGKRFVPIVTSVVAIATGVLLSFAWPPIQDGLNSLSNFLLNKNLTLTTFIFGIIERSLIPFGLHHIFYSPFWFEFGSYTNHAGELVRGDQRIWMAQLKDGVPFTAGAFTTGKYPFMMFGLPAAAFAIYKNARPERKKVVGGLMLSAGLTAFLTGITEPLEFSFLFVAPVLYGIHVLLAGTSFLVMHLLGVKIGMTFSGGFIDYILYGLLNWDRSHALLVIPVGIVYAIVYYFLFDFAIRKFKLKTPGREDEETEIRNSSVAKLPFDVLDAMGGKENIKHLDACITRLRVEVVDKSKVDVAGIKALGASGVLEVGNNMQAIFGPKSDQIKHDMAKIMSGEITKPSETTVTEEMSDEPVHVEALGTTDIYAPGVGQIIPLSEVPDQVFAGKMMGDGIGFIPEKGEIVAPFDGTVKTIFPTKHAIGLESESGVEVLIHIGIDTVKLNGEGFESLINVDEKVTQAQPLMKVNLAYLKAHAPSIVTPMIITNLENKELVIEDVQDADPGKLIMTVK.

The region spanning Lys-3–Asp-427 is the PTS EIIC type-1 domain. 10 consecutive transmembrane segments (helical) span residues Ile-12–Phe-32, Leu-81–Met-101, Leu-137–Leu-157, Phe-182–Trp-202, Leu-223–Ile-243, Ala-284–Ile-304, Val-315–Pro-335, Phe-340–Leu-360, Leu-364–Gly-384, and Leu-395–Ile-415. The region spanning Ala-438–Lys-519 is the PTS EIIB type-1 domain. The Phosphocysteine intermediate; for EIIB activity role is filled by Cys-460. The 105-residue stretch at Asp-560–Asn-664 folds into the PTS EIIA type-1 domain. His-612 functions as the Tele-phosphohistidine intermediate; for EIIA activity in the catalytic mechanism.

The protein localises to the cell membrane. The phosphoenolpyruvate-dependent sugar phosphotransferase system (sugar PTS), a major carbohydrate active -transport system, catalyzes the phosphorylation of incoming sugar substrates concomitantly with their translocation across the cell membrane. This system is involved in alpha- and beta-glucoside transport. This chain is PTS system glucoside-specific EIICBA component (glcB), found in Staphylococcus aureus (strain Mu3 / ATCC 700698).